The sequence spans 227 residues: DnaJ homolog subfamily B member 8 (227 aa).

Positions 3 to 69 constitute a J domain; that stretch reads NYYEVLGVQS…KKRSVYDRAG (67 aa).

In terms of assembly, interacts with histone deacetylases HDAC4, HDAC6, and SIRT2, HDAC activity is required for antiaggregation.

In terms of biological role, efficient suppressor of aggregation and toxicity of disease-associated polyglutamine proteins. In Mus musculus (Mouse), this protein is DnaJ homolog subfamily B member 8 (Dnajb8).